Reading from the N-terminus, the 314-residue chain is Nodulation protein D 1 (314 aa).

The HTH lysR-type domain occupies 6–63 (LDLNLLVALDAVMTARNLTAAARKINLSQPAMSAAIARLRTYFRDELFTMRGRELVPT). Residues 23–42 (LTAAARKINLSQPAMSAAIA) constitute a DNA-binding region (H-T-H motif).

This sequence belongs to the LysR transcriptional regulatory family.

In terms of biological role, nodD regulates the expression of the nodABCFE genes which encode other nodulation proteins. NodD is also a negative regulator of its own expression. Binds flavonoids as inducers. The sequence is that of Nodulation protein D 1 (nodD1) from Bradyrhizobium diazoefficiens (strain JCM 10833 / BCRC 13528 / IAM 13628 / NBRC 14792 / USDA 110).